A 189-amino-acid chain; its full sequence is Potassium-transporting ATPase KdpC subunit (189 aa).

Residues 6-26 (PAILFFIVFTILCGGVYPAVV) form a helical membrane-spanning segment.

It belongs to the KdpC family. The system is composed of three essential subunits: KdpA, KdpB and KdpC.

The protein localises to the cell inner membrane. In terms of biological role, part of the high-affinity ATP-driven potassium transport (or Kdp) system, which catalyzes the hydrolysis of ATP coupled with the electrogenic transport of potassium into the cytoplasm. This subunit acts as a catalytic chaperone that increases the ATP-binding affinity of the ATP-hydrolyzing subunit KdpB by the formation of a transient KdpB/KdpC/ATP ternary complex. In Geotalea uraniireducens (strain Rf4) (Geobacter uraniireducens), this protein is Potassium-transporting ATPase KdpC subunit.